Reading from the N-terminus, the 77-residue chain is Acyl carrier protein (77 aa).

Residues 2–77 enclose the Carrier domain; the sequence is SDVADRVKKI…DAVKFISEAS (76 aa). At Ser37 the chain carries O-(pantetheine 4'-phosphoryl)serine.

The protein belongs to the acyl carrier protein (ACP) family. In terms of processing, 4'-phosphopantetheine is transferred from CoA to a specific serine of apo-ACP by AcpS. This modification is essential for activity because fatty acids are bound in thioester linkage to the sulfhydryl of the prosthetic group.

It localises to the cytoplasm. Its pathway is lipid metabolism; fatty acid biosynthesis. Carrier of the growing fatty acid chain in fatty acid biosynthesis. The protein is Acyl carrier protein of Ruegeria pomeroyi (strain ATCC 700808 / DSM 15171 / DSS-3) (Silicibacter pomeroyi).